The primary structure comprises 574 residues: Splicing factor U2af large subunit A (574 aa).

Residues 1 to 180 (MAEHEEQPYE…SKRVSGFDQG (180 aa)) form a disordered region. Residues 18 to 41 (PAPASAYAEYPAPEGSPPAAAAKP) are compositionally biased toward low complexity. Residues 53–143 (RSQHETQPHD…ERRRDRDRDG (91 aa)) show a composition bias toward basic and acidic residues. Basic residues predominate over residues 144 to 172 (HRRHRSRSRSPSKGRDRRSRSRSRSRSSK). 3 consecutive RRM domains span residues 238–321 (RRVY…RPTD), 358–436 (DRIF…RANQ), and 479–565 (QVVS…YPED).

It belongs to the splicing factor SR family.

It localises to the nucleus. Necessary for the splicing of pre-mRNA. The sequence is that of Splicing factor U2af large subunit A (U2AF65A) from Oryza sativa subsp. japonica (Rice).